The following is a 275-amino-acid chain: Large ribosomal subunit protein uL2 (275 aa).

A disordered region spans residues 222 to 275 (GVAMNPVDHPHGGGEGRNKGRHPTSPWGQKSKGLKTRNNKRTDSMIIRRRAKKK). A compositionally biased stretch (basic and acidic residues) spans 229-239 (DHPHGGGEGRN).

The protein belongs to the universal ribosomal protein uL2 family. In terms of assembly, part of the 50S ribosomal subunit. Forms a bridge to the 30S subunit in the 70S ribosome.

In terms of biological role, one of the primary rRNA binding proteins. Required for association of the 30S and 50S subunits to form the 70S ribosome, for tRNA binding and peptide bond formation. It has been suggested to have peptidyltransferase activity; this is somewhat controversial. Makes several contacts with the 16S rRNA in the 70S ribosome. The polypeptide is Large ribosomal subunit protein uL2 (Psychrobacter arcticus (strain DSM 17307 / VKM B-2377 / 273-4)).